A 63-amino-acid polypeptide reads, in one-letter code: Large ribosomal subunit protein uL29 (63 aa).

It belongs to the universal ribosomal protein uL29 family.

The protein is Large ribosomal subunit protein uL29 of Neisseria meningitidis serogroup C (strain 053442).